The sequence spans 227 residues: UPF0173 metal-dependent hydrolase BCG9842_B0515 (227 aa).

It belongs to the UPF0173 family.

This Bacillus cereus (strain G9842) protein is UPF0173 metal-dependent hydrolase BCG9842_B0515.